A 546-amino-acid chain; its full sequence is Chaperonin GroEL (546 aa).

ATP-binding positions include T30 to P33, K51, D87 to T91, G415, and D495.

This sequence belongs to the chaperonin (HSP60) family. As to quaternary structure, forms a cylinder of 14 subunits composed of two heptameric rings stacked back-to-back. Interacts with the co-chaperonin GroES.

The protein localises to the cytoplasm. The catalysed reaction is ATP + H2O + a folded polypeptide = ADP + phosphate + an unfolded polypeptide.. In terms of biological role, together with its co-chaperonin GroES, plays an essential role in assisting protein folding. The GroEL-GroES system forms a nano-cage that allows encapsulation of the non-native substrate proteins and provides a physical environment optimized to promote and accelerate protein folding. The polypeptide is Chaperonin GroEL (Brucella anthropi (strain ATCC 49188 / DSM 6882 / CCUG 24695 / JCM 21032 / LMG 3331 / NBRC 15819 / NCTC 12168 / Alc 37) (Ochrobactrum anthropi)).